Here is an 80-residue protein sequence, read N- to C-terminus: Crustacean hyperglycemic hormones (80 aa).

3 disulfide bridges follow: cysteine 13–cysteine 49, cysteine 29–cysteine 45, and cysteine 32–cysteine 58. Valine 78 carries the post-translational modification Valine amide.

Belongs to the arthropod CHH/MIH/GIH/VIH hormone family. In terms of tissue distribution, produced by the medulla terminalis X-organ in the eyestalks and transported to the sinus gland where they are stored and released.

The protein localises to the secreted. Functionally, hormone found in the sinus gland of isopods and decapods which controls the blood sugar level. Has a secretagogue action over the amylase released from the midgut gland. May act as a stress hormone and may be involved in the control of molting and reproduction. This Penaeus vannamei (Whiteleg shrimp) protein is Crustacean hyperglycemic hormones.